Here is a 504-residue protein sequence, read N- to C-terminus: L-carnitine/gamma-butyrobetaine antiporter (504 aa).

The next 12 helical transmembrane spans lie at 10–30, 51–71, 92–112, 143–163, 195–215, 231–251, 263–283, 316–336, 347–367, 398–418, 446–466, and 475–495; these read IEPK…WLTV, WGWA…WLVF, IFMM…SIEI, GPLP…FFFV, FYLV…TPLV, LDAI…ACGL, SYLS…SFIM, WTVF…IFLA, LCFG…TVLG, WAAL…CFIA, LLVR…LLAL, and AIIA…LSFI.

It belongs to the BCCT transporter (TC 2.A.15) family. CaiT subfamily. In terms of assembly, homotrimer.

The protein localises to the cell inner membrane. It carries out the reaction 4-(trimethylamino)butanoate(in) + (R)-carnitine(out) = 4-(trimethylamino)butanoate(out) + (R)-carnitine(in). Its pathway is amine and polyamine metabolism; carnitine metabolism. Its function is as follows. Catalyzes the exchange of L-carnitine for gamma-butyrobetaine. The protein is L-carnitine/gamma-butyrobetaine antiporter of Escherichia coli O157:H7.